Consider the following 42-residue polypeptide: Crotamine Ile-19 (42 aa).

3 cysteine pairs are disulfide-bonded: Cys-4–Cys-36, Cys-11–Cys-30, and Cys-18–Cys-37.

The protein belongs to the crotamine-myotoxin family. As to quaternary structure, monomer. Expressed by the venom gland.

It is found in the secreted. Its function is as follows. Cationic peptide that possesses multiple functions. It acts as a cell-penetrating peptide (CPP), and as a potent voltage-gated potassium channel (Kv) inhibitor, it induces severe muscle necrosis by a non-enzymatic mechanism and exhibits antimicrobial activities. It also elicits a short-lasting hyperextension of the hind limb. It does not cause observable tissue damage (whereas the whole venom causes severe myonecrosis accompanied by edema and hemorrhage). This chain is Crotamine Ile-19, found in Crotalus durissus ruruima (South American rattlesnake).